A 350-amino-acid chain; its full sequence is Nicotinate-nucleotide--dimethylbenzimidazole phosphoribosyltransferase (350 aa).

Catalysis depends on Glu-317, which acts as the Proton acceptor.

Belongs to the CobT family.

The catalysed reaction is 5,6-dimethylbenzimidazole + nicotinate beta-D-ribonucleotide = alpha-ribazole 5'-phosphate + nicotinate + H(+). The protein operates within nucleoside biosynthesis; alpha-ribazole biosynthesis; alpha-ribazole from 5,6-dimethylbenzimidazole: step 1/2. Catalyzes the synthesis of alpha-ribazole-5'-phosphate from nicotinate mononucleotide (NAMN) and 5,6-dimethylbenzimidazole (DMB). In Shewanella putrefaciens (strain CN-32 / ATCC BAA-453), this protein is Nicotinate-nucleotide--dimethylbenzimidazole phosphoribosyltransferase.